Consider the following 358-residue polypeptide: DNA-directed RNA polymerase subunit alpha (358 aa).

The segment at 1 to 244 (MENKLFSCIE…NLFLSIYDTS (244 aa)) is alpha N-terminal domain (alpha-NTD). Residues 287 to 358 (YKTSFDKNLT…KMVKYGTVNK (72 aa)) form an alpha C-terminal domain (alpha-CTD) region.

Belongs to the RNA polymerase alpha chain family. Homodimer. The RNAP catalytic core consists of 2 alpha, 1 beta, 1 beta' and 1 omega subunit. When a sigma factor is associated with the core the holoenzyme is formed, which can initiate transcription.

The protein resides in the plastid. Its subcellular location is the chloroplast. It catalyses the reaction RNA(n) + a ribonucleoside 5'-triphosphate = RNA(n+1) + diphosphate. Functionally, DNA-dependent RNA polymerase catalyzes the transcription of DNA into RNA using the four ribonucleoside triphosphates as substrates. The chain is DNA-directed RNA polymerase subunit alpha (rpoA) from Bigelowiella natans (Pedinomonas minutissima).